A 105-amino-acid polypeptide reads, in one-letter code: ATP-dependent Clp protease adapter protein ClpS (105 aa).

It belongs to the ClpS family. As to quaternary structure, binds to the N-terminal domain of the chaperone ClpA.

In terms of biological role, involved in the modulation of the specificity of the ClpAP-mediated ATP-dependent protein degradation. This Streptomyces avermitilis (strain ATCC 31267 / DSM 46492 / JCM 5070 / NBRC 14893 / NCIMB 12804 / NRRL 8165 / MA-4680) protein is ATP-dependent Clp protease adapter protein ClpS.